A 721-amino-acid chain; its full sequence is YTH domain-containing protein 1 (721 aa).

Positions glutamate 29 to aspartate 38 are enriched in acidic residues. The tract at residues glutamate 29 to lysine 239 is disordered. Residues serine 48–serine 75 show a composition bias toward low complexity. The span at alanine 135–proline 151 shows a compositional bias: basic and acidic residues. The 138-residue stretch at threonine 254 to phenylalanine 391 folds into the YTH domain. RNA contacts are provided by residues lysine 260–asparagine 262, tryptophan 276, and tryptophan 327. 3 disordered regions span residues proline 424–histidine 471, aspartate 580–proline 605, and alanine 651–arginine 721. The segment covering glycine 432 to glycine 443 has biased composition (gly residues). Basic residues predominate over residues proline 451–histidine 471. Residues glycine 583–glycine 600 show a composition bias toward pro residues. The segment covering alanine 651–glycine 670 has biased composition (gly residues). Residues arginine 699–glycine 708 are compositionally biased toward basic and acidic residues.

The protein localises to the nucleus. Functionally, regulator of alternative splicing that specifically recognizes and binds N6-methyladenosine (m6A)-containing RNAs. Acts by acting as a reader of m6A methylation. Required for sex determination and dosage compensation via Sxl alternative splicing: m6A methylation acts as a key regulator of Sxl pre-mRNA and promotes female-specific alternative splicing of Sxl, which determines female physiognomy. M6A methylation is also required for neuronal functions. This Drosophila melanogaster (Fruit fly) protein is YTH domain-containing protein 1.